A 307-amino-acid chain; its full sequence is Ventral anterior homeobox 2 (307 aa).

Disordered regions lie at residues 1–70, 155–175, and 197–254; these read MFDQ…DKLL, RTKQ…STSE, and PPPN…PSPR. Positions 25–38 are enriched in basic and acidic residues; sequence CRDRGRESKSRTEV. The segment covering 46-62 has biased composition (low complexity); the sequence is SSTDTPGTSASTPTSSS. Positions 103-162 form a DNA-binding region, homeobox; sequence PKRTRTSFTAEQLYRLELEFQRCQYVVGRERTELARQLNLSETQVKVWFQNRRTKQKKDQ. Basic and acidic residues predominate over residues 159-170; that stretch reads KKDQTKDTDKRS. Positions 202–249 are enriched in low complexity; it reads LLAHPHPGNGSLLGSPSVSTSSGVSSSTTPPGAGSGTFGLSLSSLSGT.

This sequence belongs to the EMX homeobox family. As to expression, expressed in the anterior neural keel and later in the preoptic area, optic stalk and ventral retina.

Its subcellular location is the nucleus. In terms of biological role, transcription factor that may function in dorsoventral specification of the forebrain. Required for closure of the choroid fissure and together with vax1 is required for optic nerve differentiation and to limit retinal development to the optic cup. This chain is Ventral anterior homeobox 2 (vax2), found in Danio rerio (Zebrafish).